The primary structure comprises 442 residues: 3-phosphoshikimate 1-carboxyvinyltransferase (442 aa).

Residues Lys23, Ser24, and Arg28 each contribute to the 3-phosphoshikimate site. Phosphoenolpyruvate is bound at residue Lys23. Residues Gly95 and Arg123 each contribute to the phosphoenolpyruvate site. Ser167, Gln169, Asp315, and Lys342 together coordinate 3-phosphoshikimate. Gln169 serves as a coordination point for phosphoenolpyruvate. Asp315 (proton acceptor) is an active-site residue. Phosphoenolpyruvate contacts are provided by Arg346 and Arg390.

The protein belongs to the EPSP synthase family. In terms of assembly, monomer.

The protein localises to the cytoplasm. It catalyses the reaction 3-phosphoshikimate + phosphoenolpyruvate = 5-O-(1-carboxyvinyl)-3-phosphoshikimate + phosphate. Its pathway is metabolic intermediate biosynthesis; chorismate biosynthesis; chorismate from D-erythrose 4-phosphate and phosphoenolpyruvate: step 6/7. Its function is as follows. Catalyzes the transfer of the enolpyruvyl moiety of phosphoenolpyruvate (PEP) to the 5-hydroxyl of shikimate-3-phosphate (S3P) to produce enolpyruvyl shikimate-3-phosphate and inorganic phosphate. The polypeptide is 3-phosphoshikimate 1-carboxyvinyltransferase (Dichelobacter nodosus (strain VCS1703A)).